Consider the following 119-residue polypeptide: Immunoglobulin heavy variable 3-72 (119 aa).

The first 19 residues, 1–19 (MEFGLSWVFLVVILQGVQC), serve as a signal peptide directing secretion. Residues 20 to 44 (EVQLVESGGGLVQPGGSLRLSCAAS) form a framework-1 region. One can recognise an Ig-like domain in the interval 20-119 (EVQLVESGGG…EDTAVYYCAR (100 aa)). A disulfide bond links Cys41 and Cys117. A complementarity-determining-1 region spans residues 45-52 (GFTFSDHY). Residues 53-69 (MDWVRQAPGKGLEWVGR) are framework-2. A complementarity-determining-2 region spans residues 70-79 (TRNKANSYTT). The framework-3 stretch occupies residues 80-117 (EYAASVKGRFTISRDDSKNSLYLQMNSLKTEDTAVYYC). A complementarity-determining-3 region spans residues 118–119 (AR).

Immunoglobulins are composed of two identical heavy chains and two identical light chains; disulfide-linked.

Its subcellular location is the secreted. It is found in the cell membrane. Functionally, v region of the variable domain of immunoglobulin heavy chains that participates in the antigen recognition. Immunoglobulins, also known as antibodies, are membrane-bound or secreted glycoproteins produced by B lymphocytes. In the recognition phase of humoral immunity, the membrane-bound immunoglobulins serve as receptors which, upon binding of a specific antigen, trigger the clonal expansion and differentiation of B lymphocytes into immunoglobulins-secreting plasma cells. Secreted immunoglobulins mediate the effector phase of humoral immunity, which results in the elimination of bound antigens. The antigen binding site is formed by the variable domain of one heavy chain, together with that of its associated light chain. Thus, each immunoglobulin has two antigen binding sites with remarkable affinity for a particular antigen. The variable domains are assembled by a process called V-(D)-J rearrangement and can then be subjected to somatic hypermutations which, after exposure to antigen and selection, allow affinity maturation for a particular antigen. The polypeptide is Immunoglobulin heavy variable 3-72 (Homo sapiens (Human)).